The sequence spans 429 residues: TNFAIP3-interacting protein 2 (429 aa).

Ser7 bears the Phosphoserine mark. The stretch at 29-117 forms a coiled coil; that stretch reads QRLRRLQDQL…MQQLLSQPQH (89 aa). Positions 177-195 are enriched in basic and acidic residues; that stretch reads HAQRNVGERSPDQSEHTDG. Positions 177–199 are disordered; it reads HAQRNVGERSPDQSEHTDGHTSV. Coiled-coil stretches lie at residues 196–226 and 255–340; these read HTSVQSVIEKLQEENRLLKQKVTHVEDLNAK and ELMR…QVSW. A ubiquitin-binding domain (UBD) region spans residues 289 to 347; sequence RDAALERVQMLEQQILAYKDDFMSERADRERAQSRIQELEEKVASLLHQVSWRQDSREP. The disordered stretch occupies residues 372-400; the sequence is PGGWRPGTGSQQPEPPAEGGHPGAAQRGQ. Residues 388-397 are compositionally biased toward low complexity; sequence AEGGHPGAAQ. Residues 397–429 form a CCHC NOA-type zinc finger; sequence QRGQGDLQCPHCLQCFSDEQGEELLRHVAECCQ. Zn(2+) contacts are provided by Cys405, Cys408, His423, and Cys427.

As to quaternary structure, interacts with STK11/LKB1, TNFAIP3, IKBKG, NFKB1, MAP3K8, TEK, RIPK1, CHUK, IKBKB and SMARCD1. Interacts with polyubiquitin. (Microbial infection) Interacts with severe fever with thrombocytopenia syndrome virus (SFTSV) NSs; this interaction promotes TPL2 complex formation and signaling activity leading to IL-10 production. In vitro phosphorylated by CHUK. Post-translationally, ubiquitinated; undergoes 'Lys-48'-linked polyubiquitination probably leading to constitutive proteasomal degradation which can be impaired by IKK-A/CHUK or IKBKB probably involving deubiquitination. Deubiquitinated by USP35; leading to stabilization and inhibition of TNFalpha-induced NF-kappa-B activation. As to expression, ubiquitously expressed in all tissues examined.

The protein localises to the cytoplasm. It localises to the nucleus. Inhibits NF-kappa-B activation by blocking the interaction of RIPK1 with its downstream effector NEMO/IKBKG. Forms a ternary complex with NFKB1 and MAP3K8 but appears to function upstream of MAP3K8 in the TLR4 signaling pathway that regulates MAP3K8 activation. Involved in activation of the MEK/ERK signaling pathway during innate immune response; this function seems to be stimulus- and cell type specific. Required for stability of MAP3K8. Involved in regulation of apoptosis in endothelial cells; promotes TEK agonist-stimulated endothelial survival. May act as transcriptional coactivator when translocated to the nucleus. Enhances CHUK-mediated NF-kappa-B activation involving NF-kappa-B p50-p65 and p50-c-Rel complexes. The chain is TNFAIP3-interacting protein 2 from Homo sapiens (Human).